We begin with the raw amino-acid sequence, 805 residues long: MPRIIIKGGVWRNTEDEILKAAVMKYGKNQWSRIASLLHRKSAKQCKARWYEWLDPSIKKTEWSREEDEKLLHLAKLMPTQWRTIAPLIGRTAAQCLERYEYLLDQAQAKEGDKDEGDDPRKLRPGEIDPNPETKPARPDPIDMDEDELEMLSEARARLANTQGKKAKRKAREKQLEEARRLAALQKRRELRAAGIDIRKHRKKKRGVDYNAEIPFEKKPASGFYDTSDENLPDYQPDFKRLRQDHLEGKMRDEIEQQERKKDKERMKKKKESDLPGAVMQINKMNNPDHVKKRSKLVLPKPQISDGELEEIVKMGYASEVARASVENGGQASDALLSEYSVTPAINKALRTPRTPAEQDTVLQEAQNILALSNVDTPLKGGLNTPMHESDFQGVTPRQQAIQTPNMLLSTPYRTPGEGSGSTPRQGMTPRGAIGTPSQRSVRDKLNINPEDAVMEEYESECAAKQQQSEAKEQLLAGLASLPAPSNDFEIVLPETPAEASEEHKPMDFVEDAADIDERALALRAKQEELERRRRSQAVQRELPRPSNVNTSVLRPTNVEPPLSALQMAEELIKKEMIVMLRNDIINHPTSQQIESLTNKKTRNAAQAVITGNRAALERDPMENFTDEELSSAKNLLRQEMDFVKSKMAHSDLPLEAYSKVWEECYAQVLFLPSQQRYTRAAMASKKDRLESLEKRLELNRYQMTEDAKKAAKIEKKLKVLLGGYQTRAVGLTKQLSDLHEQLEQSQVEMTTFQALRNQELQAIPKRLEALKEDVQRQTEREKQLQAQYSELLYERDSLLSKLQI.

2 consecutive HTH myb-type domains span residues 1-58 and 59-108; these read MPRI…DPSI and KKTE…DQAQ. 2 consecutive DNA-binding regions (H-T-H motif) follow at residues 31–54 and 82–104; these read WSRI…YEWL and WRTI…EYLL. Residues 108–127 show a composition bias toward basic and acidic residues; the sequence is QAKEGDKDEGDDPRKLRPGE. Disordered regions lie at residues 108–143, 246–293, 409–442, and 530–556; these read QAKE…DPID, HLEG…HVKK, LSTP…QRSV, and LERR…VLRP. Residues 142-193 are a coiled coil; that stretch reads IDMDEDELEMLSEARARLANTQGKKAKRKAREKQLEEARRLAALQKRRELRA. The segment covering 246–274 has biased composition (basic and acidic residues); the sequence is HLEGKMRDEIEQQERKKDKERMKKKKESD. Coiled-coil stretches lie at residues 511 to 542 and 678 to 804; these read EDAA…VQRE and YTRA…SKLQ.

It belongs to the CEF1 family. Component of the precatalytic, catalytic and postcatalytic spliceosome complexes.

The protein resides in the nucleus. It is found in the cytoplasm. DNA-binding protein involved in cell cycle control. May act as a transcription activator. Plays a role in pre-mRNA splicing as core component of precatalytic, catalytic and postcatalytic spliceosomal complexes. May also play a role in the response to DNA damage (DDR). The sequence is that of Cell division cycle 5-related protein (cdc5l) from Nematostella vectensis (Starlet sea anemone).